The sequence spans 394 residues: Elongation factor Tu 2 (394 aa).

Residues 10 to 204 enclose the tr-type G domain; that stretch reads KPHVNVGTIG…YLDTYIPEPE (195 aa). The segment at 19-26 is G1; that stretch reads GHVDHGKT. 19–26 serves as a coordination point for GTP; the sequence is GHVDHGKT. Thr26 serves as a coordination point for Mg(2+). Residues 60–64 form a G2 region; it reads GITIN. Residues 81 to 84 are G3; sequence DCPG. GTP is bound by residues 81 to 85 and 136 to 139; these read DCPGH and NKCD. The interval 136 to 139 is G4; the sequence is NKCD. Residues 174-176 are G5; the sequence is SAL.

The protein belongs to the TRAFAC class translation factor GTPase superfamily. Classic translation factor GTPase family. EF-Tu/EF-1A subfamily. As to quaternary structure, monomer.

The protein resides in the cytoplasm. It carries out the reaction GTP + H2O = GDP + phosphate + H(+). GTP hydrolase that promotes the GTP-dependent binding of aminoacyl-tRNA to the A-site of ribosomes during protein biosynthesis. The chain is Elongation factor Tu 2 from Yersinia enterocolitica serotype O:8 / biotype 1B (strain NCTC 13174 / 8081).